We begin with the raw amino-acid sequence, 95 residues long: UPF0235 protein Adeh_1087 (95 aa).

Belongs to the UPF0235 family.

The chain is UPF0235 protein Adeh_1087 from Anaeromyxobacter dehalogenans (strain 2CP-C).